We begin with the raw amino-acid sequence, 876 residues long: Protein TORMOZ EMBRYO DEFECTIVE (876 aa).

WD repeat units follow at residues 58–97, 100–139, 142–183, 190–229, 255–294, 308–347, 356–396, 399–441, 444–484, 497–536, 539–580, 581–620, and 623–662; these read GESD…CIRS, GHEG…CTHY, GHKG…TEKK, KHFS…CKAT, LDQK…CLYE, ESKR…EETE, GYNE…CSYV, GHKE…CIGV, GHNG…EDSE, AHDK…HVVT, GHKR…KTFE, GHTS…CIAT, and QHED…DKED. The tract at residues 816 to 876 is disordered; it reads VETEYPKDEK…AEAQGSVIAV (61 aa). Residues 819 to 831 show a composition bias toward basic and acidic residues; the sequence is EYPKDEKKKEKDV. The Nuclear localization signal signature appears at 848 to 855; that stretch reads SRKRKSQK. Basic residues predominate over residues 849 to 864; that stretch reads RKRKSQKSKGKSNKKR.

As to expression, preferentially expressed in dividing cells in a variety of tissues and meristematic regions.

It is found in the nucleus. The protein localises to the nucleolus. Its function is as follows. Essential protein involved in the regulation of cell division planes during embryogenesis which defines cell patterning, especially longitudinal division planes of the proembryo, probably via the regulation of embryo patterning genes expression patterns. This is Protein TORMOZ EMBRYO DEFECTIVE from Arabidopsis thaliana (Mouse-ear cress).